Consider the following 135-residue polypeptide: ARGOS-like protein (135 aa).

The tract at residues 71–122 (FSLESMVVLVGLTASLLILPLILPPLPPPPFMLLLIPIGIMVLLMVLAFMPS) is organ Size Related (OSR) domain. 2 helical membrane passes run 76–96 (MVVL…LPPL) and 100–120 (PFML…LAFM).

Belongs to the plant organ size related (OSR) protein family. As to expression, expressed in cotyledons, roots, flowers, siliques and leaves.

The protein localises to the membrane. It localises to the nucleus. It is found in the cytoplasm. Its subcellular location is the endoplasmic reticulum. In terms of biological role, promotes cell expansion-dependent organ growth, probably via a brassinosteroids signaling pathway. Acts downstream of BRI1. The polypeptide is ARGOS-like protein (ARL) (Arabidopsis thaliana (Mouse-ear cress)).